The chain runs to 124 residues: uncharacterized protein (124 aa).

Its subcellular location is the plastid. The protein localises to the chloroplast. This is an uncharacterized protein from Chlamydomonas reinhardtii (Chlamydomonas smithii).